The sequence spans 377 residues: MSPSAVDDAPKATGAAISVKPNIGVFTNPKHDLWISEAEPSADAVKSGADLKPGEVTIAVRSTGICGSDVHFWHAGCIGPMIVEGDHILGHESAGEVIAVHPTVSSLQIGDRVAIEPNIICNACEPCLTGRYNGCEKVEFLSTPPVPGLLRRYVNHPAVWCHKIGNMSWENGALLEPLSVALAGMQRAKVQLGDPVLVCGAGPIGLVSMLCAAAAGACPLVITDISESRLAFAKEICPRVTTHRIEIGKSAEETAKSIVSSFGGVEPAVTLECTGVESSIAAAIWASKFGGKVFVIGVGKNEISIPFMRASVREVDIQLQYRYSNTWPRAIRLIESGVIDLSKFVTHRFPLEDAVKAFETSADPKSGAIKVMIQSLD.

Positions 66, 91, 92, 121, 124, 127, 135, and 176 each coordinate Zn(2+). NAD(+) is bound by residues 203 to 204 (PI), Asp-224, Arg-229, Ile-296, and 320 to 322 (QYR).

It belongs to the zinc-containing alcohol dehydrogenase family. Homotetramer. Requires Zn(2+) as cofactor. The N-terminus is blocked.

The enzyme catalyses L-arabinitol + NAD(+) = L-xylulose + NADH + H(+). It participates in carbohydrate degradation; L-arabinose degradation via L-arabinitol; D-xylulose 5-phosphate from L-arabinose (fungal route): step 2/5. In terms of biological role, catalyzes the NAD-dependent oxidation of L-arabinitol to L-xylulose in the fungal L-arabinose catabolic pathway. L-arabinose catabolism is important for using plant material as a carbon source. Can partially compensate for xylitol dehydrogenase in xdh1 mutants. Also oxidizes galactitol to L-xylo-3-hexulose as an alternative to the standard Leloir pathway for D-galactose metabolism. NADP cannot act as a cosubstrate. This is L-arabinitol 4-dehydrogenase (lad1) from Hypocrea jecorina (Trichoderma reesei).